The following is a 282-amino-acid chain: Ribosome biogenesis GTPase A (282 aa).

The 165-residue stretch at 14–178 folds into the CP-type G domain; it reads RREVTEKLKL…LLDTPGILWP (165 aa). Residues 58–61, 86–87, 130–135, and G174 contribute to the GTP site; these read NKAD, NS, and NVGKST.

Belongs to the TRAFAC class YlqF/YawG GTPase family. MTG1 subfamily. In terms of assembly, interacts with ctc. Interacts with the immature 50S ribosome subunit. 2 molecules of rbgA bind to one 50S subunit.

It localises to the cytoplasm. Essential protein that is required for a late step of 50S ribosomal subunit assembly. Has GTPase activity that is stimulated by interaction with the immature 50S ribosome subunit. Binds to the 23S rRNA. Required for the association of ribosomal proteins rplP and rpmA with the large subunit. The polypeptide is Ribosome biogenesis GTPase A (rbgA) (Bacillus spizizenii (strain ATCC 23059 / NRRL B-14472 / W23) (Bacillus subtilis subsp. spizizenii)).